Reading from the N-terminus, the 1124-residue chain is Transient-receptor-potential-like protein (1124 aa).

Residues 1 to 24 are disordered; that stretch reads MGRKKKLPTGVSSGVSHASSAPKS. The Cytoplasmic segment spans residues 1–340; the sequence is MGRKKKLPTG…GFRRKSIVDK (340 aa). A compositionally biased stretch (low complexity) spans 10 to 21; that stretch reads GVSSGVSHASSA. ANK repeat units lie at residues 40–69, 78–107, and 152–181; these read LEEK…RHQH, LGRR…ETKD, and PDIT…AVPV. The chain crosses the membrane as a helical span at residues 341 to 361; it reads VICIAQVAVLFPLYCLIYMCA. The Extracellular segment spans residues 362 to 373; the sequence is PNCRTGQLMRKP. Residues 374-394 traverse the membrane as a helical segment; it reads FMKFLIHASSYLFFLFILILV. At 395–431 the chain is on the cytoplasmic side; that stretch reads SQRADDDFVRIFGTTRMKKELAEQELRQRGQTPSKLE. Residues 432 to 452 form a helical membrane-spanning segment; it reads LIVVMYVIGFVWEEVQEIFAV. The Extracellular portion of the chain corresponds to 453–512; it reads GMKSYLRNMWNFIDFLRNSLYVSVMCLRAFAYIQQATEIARDPQMAYIPREKWHDFDPQL. A helical membrane pass occupies residues 513–533; sequence IAEGLFAAANVFSALKLVHLF. Over 534–548 the chain is Cytoplasmic; the sequence is SINPHLGPLQISLGR. The chain crosses the membrane as a helical span at residues 549 to 569; the sequence is MVIDIVKFFFIYTLVLFAFAC. Over 570–645 the chain is Extracellular; the sequence is GLNQLLWYFA…GIKSYTRFWG (76 aa). The helical transmembrane segment at 646-666 threads the bilayer; that stretch reads LLMFGSYSVINVIVLLNLLIA. Topologically, residues 667-1124 are cytoplasmic; it reads MMSNSYAMID…TSPQRPKHRN (458 aa). 2 calmodulin-binding regions span residues 710–728 and 853–895; these read SVKW…IDRQ and IPSK…SQIG. Disordered stretches follow at residues 978 to 1013 and 1031 to 1124; these read RAMA…GVSH and LIAN…KHRN. A compositionally biased stretch (low complexity) spans 1035–1063; it reads SAPSAPTAPPKKSAPTAPTPTYKPTTHAP. Composition is skewed to basic and acidic residues over residues 1069–1081 and 1090–1106; these read GNRE…DGVR and HVVD…RDNV. The span at 1107-1118 shows a compositional bias: polar residues; it reads SDISSIASTSPQ.

Belongs to the transient receptor (TC 1.A.4) family. STrpC subfamily. Forms heteromultimers with Trpgamma and, to a lower extent, with trp. Interacts with Fkbp59 in vivo and is found in the inaD signaling complex. In terms of tissue distribution, expressed predominantly in the rhabdomeres of photoreceptor cells.

It localises to the membrane. It is found in the cell projection. The protein localises to the rhabdomere membrane. A light-sensitive calcium channel that is required for inositide-mediated Ca(2+) entry in the retina during phospholipase C (PLC)-mediated phototransduction. Required for vision in the dark and in dim light. Binds calmodulin. Trp and trpl act together in the light response, although it is unclear whether as heteromultimers or distinct units. Also forms a functional cation channel with Trpgamma. Activated by fatty acids, metabolic stress, inositols and GTP-binding proteins. The protein is Transient-receptor-potential-like protein (trpl) of Drosophila melanogaster (Fruit fly).